Consider the following 650-residue polypeptide: Exonuclease 3'-5' domain-containing protein 2 (650 aa).

The Mitochondrial intermembrane segment spans residues 1-6; that stretch reads MSRQNL. A helical membrane pass occupies residues 7–29; it reads VALTVTTLLGVAMGGFVLWKGIQ. The Cytoplasmic portion of the chain corresponds to 30-650; the sequence is RRWSKTSRVM…YGDDLPIKLS (621 aa). Positions 34–89 are disordered; sequence KTSRVMQQQPQQPQQPQQPQPQPQPQPQPQPEHPQPQQQVPGGREWPPPEDDQLPF. Pro residues predominate over residues 49-67; sequence PQQPQPQPQPQPQPQPEHP. 3 residues coordinate a divalent metal cation: Asp-137, Glu-139, and Asp-275. The 3'-5' exonuclease domain maps to 184–276; sequence ILADGAILKV…DQVTYAARDA (93 aa). The tract at residues 340 to 373 is disordered; the sequence is SQLKPRNRKAKTDRMVPGNNQGRDPRKHKRKPLG.

The protein belongs to the EXD2 family. In terms of assembly, homodimer. Interacts with RBBP8, MRE11 and BRCA1. Mg(2+) serves as cofactor. The cofactor is Mn(2+).

It localises to the mitochondrion outer membrane. Its subcellular location is the mitochondrion matrix. It is found in the nucleus. The protein localises to the chromosome. The catalysed reaction is Exonucleolytic cleavage in the 3'- to 5'-direction to yield nucleoside 5'-phosphates.. In terms of biological role, exonuclease that has both 3'-5' exoribonuclease and exodeoxyribonuclease activities, depending on the divalent metal cation used as cofactor. In presence of Mg(2+), only shows 3'-5' exoribonuclease activity, while it shows both exoribonuclease and exodeoxyribonuclease activities in presence of Mn(2+). Acts as an exoribonuclease in mitochondrion, possibly by regulating ATP production and mitochondrial translation. Also involved in the response to DNA damage. Acts as 3'-5' exodeoxyribonuclease for double-strand breaks resection and efficient homologous recombination. Plays a key role in controlling the initial steps of chromosomal break repair, it is recruited to chromatin in a damage-dependent manner and functionally interacts with the MRN complex to accelerate resection through its 3'-5' exonuclease activity, which efficiently processes double-stranded DNA substrates containing nicks. Also involved in response to replicative stress: recruited to stalled forks and is required to stabilize and restart stalled replication forks by restraining excessive fork regression, thereby suppressing their degradation. The polypeptide is Exonuclease 3'-5' domain-containing protein 2 (Mus musculus (Mouse)).